The primary structure comprises 274 residues: Type III pantothenate kinase (274 aa).

6 to 13 lines the ATP pocket; it reads DVGNTNTV. Substrate is bound by residues Tyr110 and 117–120; that span reads GADR. The Proton acceptor role is filled by Asp119. K(+) is bound at residue Asp139. Thr142 contacts ATP. Thr194 provides a ligand contact to substrate.

It belongs to the type III pantothenate kinase family. In terms of assembly, homodimer. The cofactor is NH4(+). K(+) is required as a cofactor.

The protein resides in the cytoplasm. The catalysed reaction is (R)-pantothenate + ATP = (R)-4'-phosphopantothenate + ADP + H(+). It functions in the pathway cofactor biosynthesis; coenzyme A biosynthesis; CoA from (R)-pantothenate: step 1/5. In terms of biological role, catalyzes the phosphorylation of pantothenate (Pan), the first step in CoA biosynthesis. This is Type III pantothenate kinase from Koribacter versatilis (strain Ellin345).